The sequence spans 586 residues: Asparagine synthetase [glutamine-hydrolyzing] 1 (586 aa).

The active-site For GATase activity is the Cys-2. The Glutamine amidotransferase type-2 domain occupies 2-185 (CGILAVLGCS…PGHLYSSRER (184 aa)). Residues 50–54 (RLAIV), 75–77 (NGE), and Asp-98 each bind L-glutamine. The 324-residue stretch at 193–516 (PTWFSESIPS…PQNSARLTVP (324 aa)) folds into the Asparagine synthetase domain. ATP is bound by residues Leu-231, Val-267, and 341 to 342 (SG).

It catalyses the reaction L-aspartate + L-glutamine + ATP + H2O = L-asparagine + L-glutamate + AMP + diphosphate + H(+). Its pathway is amino-acid biosynthesis; L-asparagine biosynthesis; L-asparagine from L-aspartate (L-Gln route): step 1/1. The polypeptide is Asparagine synthetase [glutamine-hydrolyzing] 1 (AS1) (Lotus japonicus (Lotus corniculatus var. japonicus)).